The primary structure comprises 209 residues: CASP-like protein 2A1 (209 aa).

At 1–38 the chain is on the cytoplasmic side; the sequence is MSKMAEEKVLAAPATVDGGMQSSGDLQASSAAAARVRP. A helical membrane pass occupies residues 39 to 59; that stretch reads VETLLRAAPLGLCVAAMAIML. Residues 60-80 lie on the Extracellular side of the membrane; the sequence is RNSVTNEYGTVSYSDLGGFKY. The chain crosses the membrane as a helical span at residues 81–101; it reads LVYANGLCAAYSLASAFYIAV. The Cytoplasmic portion of the chain corresponds to 102–109; the sequence is PRPATLSR. Residues 110-130 traverse the membrane as a helical segment; it reads SWVVFLLDQVFTYLILAAGAA. Residues 131–163 lie on the Extracellular side of the membrane; it reads SAELLYLAYNGDKEVTWSEACGVFGGFCRQART. The chain crosses the membrane as a helical span at residues 164 to 184; sequence SVAITFASVACYILLSLISSY. The Cytoplasmic portion of the chain corresponds to 185–209; that stretch reads RLFSAYDPPQPSLGNKGVEIAAFPR.

It belongs to the Casparian strip membrane proteins (CASP) family. Homodimer and heterodimers.

It localises to the cell membrane. This is CASP-like protein 2A1 from Oryza sativa subsp. indica (Rice).